Reading from the N-terminus, the 482-residue chain is MTKFRLRYAPSPTGFLHIGNTRTALMNYLFAKHYNGDFIVRIEDTDLERNVEGAIESQFENLNWLGINADESFLKPGEEKYGKYMQSQKFGRYQELAEKLISIKKAYRCFCTTEELEKDYEDQVAKGIVATKYSGKCSRLSESEIESNLKSNKDFSIRFLVPETTLNIKDFIKGEITFDSKELGDFVILKTNKIATYNFAVVVDDFDMEISHVLRGEEHISNTPRQILIYQAFGWETPQFGHMSLIVDSTGKKLSKRSGNALFFIEQYKNQGYLPEAMFNYISLLGWSPIGEKELLTKQELISMFDDKRFSKSPSTFDMTKMKWINSQYMKALSEEEYLEFTKKYINTEMFNTKEKSEDWLNQVLLLFKKELEFADQINNHLNIFFNEVDVTSETIEILKTIEEHESVIKEFETQISTLNEWEIENIKSLIKLVSENTGKKGKDLFMPIRIASSSSEHGPSLADVIYLLGKDKVLANIAKVK.

The 'HIGH' region signature appears at 10–20 (PSPTGFLHIGN). Positions 253–257 (KLSKR) match the 'KMSKS' region motif. An ATP-binding site is contributed by K256.

Belongs to the class-I aminoacyl-tRNA synthetase family. Glutamate--tRNA ligase type 1 subfamily. In terms of assembly, monomer.

The protein localises to the cytoplasm. It catalyses the reaction tRNA(Glu) + L-glutamate + ATP = L-glutamyl-tRNA(Glu) + AMP + diphosphate. Catalyzes the attachment of glutamate to tRNA(Glu) in a two-step reaction: glutamate is first activated by ATP to form Glu-AMP and then transferred to the acceptor end of tRNA(Glu). The chain is Glutamate--tRNA ligase from Mesoplasma florum (strain ATCC 33453 / NBRC 100688 / NCTC 11704 / L1) (Acholeplasma florum).